The primary structure comprises 600 residues: Spastin (600 aa).

A disordered region spans residues 1–39 (MNSPGGRNDKKKPVTPAAETGPGSPTTPPSTETQVVLAP). The Cytoplasmic portion of the chain corresponds to 1–53 (MNSPGGRNDKKKPVTPAAETGPGSPTTPPSTETQVVLAPPSPHKRNLHLFSYP). Positions 15–33 (TPAAETGPGSPTTPPSTET) are enriched in low complexity. Residues 54-74 (LLAVFSLLRFLAFQLGLLFVW) constitute an intramembrane region (helical). The Cytoplasmic portion of the chain corresponds to 75–600 (CCELLSRSVM…WNQDFGDTTV (526 aa)). Positions 110–185 (YHQQAFQYIS…IMAKDRLQLL (76 aa)) constitute an MIT domain. The tract at residues 213 to 294 (GLLKPEKGAV…KPATPTTAVR (82 aa)) is disordered. A compositionally biased stretch (basic and acidic residues) spans 216–228 (KPEKGAVPKKKDP). Over residues 253–291 (PNCTSVPTSARQAGAHTPSNRGATGKNNTRTNKPATPTT) the composition is skewed to polar residues. 366 to 373 (GPPGNGKT) lines the ATP pocket.

It belongs to the AAA ATPase family. Spastin subfamily. As to quaternary structure, homohexamer. The homohexamer is stabilized by ATP-binding. The homohexamer may adopt a ring conformation through which microtubules pass prior to being severed. Interacts with microtubules.

It is found in the membrane. The protein resides in the cytoplasm. The protein localises to the cytoskeleton. It localises to the microtubule organizing center. Its subcellular location is the centrosome. It is found in the perinuclear region. The protein resides in the nucleus. The catalysed reaction is n ATP + n H2O + a microtubule = n ADP + n phosphate + (n+1) alpha/beta tubulin heterodimers.. In terms of biological role, ATP-dependent microtubule severing protein that specifically recognizes and cuts microtubules that are polyglutamylated. Preferentially recognizes and acts on microtubules decorated with short polyglutamate tails: severing activity increases as the number of glutamates per tubulin rises from one to eight, but decreases beyond this glutamylation threshold. Microtubule severing promotes reorganization of cellular microtubule arrays and the release of microtubules from the centrosome following nucleation. Required for membrane traffic from the endoplasmic reticulum (ER) to the Golgi and for completion of the abscission stage of cytokinesis. Also plays a role in axon growth and the formation of axonal branches. The sequence is that of Spastin from Xenopus laevis (African clawed frog).